The primary structure comprises 312 residues: Epoxyqueuosine reductase (312 aa).

Asp-132 functions as the Proton donor in the catalytic mechanism. Residues Glu-174–Ile-206 enclose the 4Fe-4S ferredoxin-type 1 domain. The [4Fe-4S] cluster site is built by Cys-186, Cys-189, Cys-192, Cys-196, Cys-212, Cys-240, Cys-243, and Cys-247. Positions Pro-226–Thr-257 constitute a 4Fe-4S ferredoxin-type 2 domain.

Belongs to the QueG family. In terms of assembly, monomer. Cob(II)alamin is required as a cofactor. [4Fe-4S] cluster serves as cofactor.

Its subcellular location is the cytoplasm. It carries out the reaction epoxyqueuosine(34) in tRNA + AH2 = queuosine(34) in tRNA + A + H2O. The protein operates within tRNA modification; tRNA-queuosine biosynthesis. Catalyzes the conversion of epoxyqueuosine (oQ) to queuosine (Q), which is a hypermodified base found in the wobble positions of tRNA(Asp), tRNA(Asn), tRNA(His) and tRNA(Tyr). The protein is Epoxyqueuosine reductase of Prochlorococcus marinus (strain NATL2A).